Consider the following 175-residue polypeptide: Large ribosomal subunit protein uL10 (175 aa).

It belongs to the universal ribosomal protein uL10 family. Part of the ribosomal stalk of the 50S ribosomal subunit. The N-terminus interacts with L11 and the large rRNA to form the base of the stalk. The C-terminus forms an elongated spine to which L12 dimers bind in a sequential fashion forming a multimeric L10(L12)X complex.

Its function is as follows. Forms part of the ribosomal stalk, playing a central role in the interaction of the ribosome with GTP-bound translation factors. This Methylococcus capsulatus (strain ATCC 33009 / NCIMB 11132 / Bath) protein is Large ribosomal subunit protein uL10.